The following is a 221-amino-acid chain: Transmembrane emp24 domain-containing protein 3 (221 aa).

The first 25 residues, 1–25 (MVHEAPHASSFQMLLQLLLLLLLRA), serve as a signal peptide directing secretion. Over 28-184 (LRSAELTFEL…RAEDLNSRVS (157 aa)) the chain is Lumenal. The GOLD domain occupies 42–124 (KQCFHEEVEQ…HKTVYFDFQV (83 aa)). At Arg-103 the chain carries Dimethylated arginine. Residues 185–205 (YWSVGETIALFVVSFSQVLLL) form a helical membrane-spanning segment. Topologically, residues 206–221 (KSFFTEKRPVNRAVHS) are cytoplasmic. The short motif at 208–209 (FF) is the COPII vesicle coat-binding element. Positions 208–221 (FFTEKRPVNRAVHS) match the COPI vesicle coat-binding motif.

This sequence belongs to the EMP24/GP25L family. In terms of assembly, monomer in endoplasmic reticulum, endoplasmic reticulum-Golgi intermediate compartment and cis-Golgi network. Interacts (via C-terminus) with COPG1; the interaction involves dimeric TMED3; however, there are conflicting reports on the interaction. Interacts with GORASP1 and GORASP2.

The protein localises to the endoplasmic reticulum-Golgi intermediate compartment membrane. It is found in the golgi apparatus. It localises to the cis-Golgi network membrane. The protein resides in the golgi stack membrane. Its subcellular location is the endoplasmic reticulum membrane. The protein localises to the cytoplasmic vesicle. It is found in the COPI-coated vesicle membrane. Potential role in vesicular protein trafficking, mainly in the early secretory pathway. Contributes to the coupled localization of TMED2 and TMED10 in the cis-Golgi network. This is Transmembrane emp24 domain-containing protein 3 (Tmed3) from Mus musculus (Mouse).